The chain runs to 185 residues: Large ribosomal subunit protein uL30 (185 aa).

This sequence belongs to the universal ribosomal protein uL30 family. In terms of assembly, part of the 50S ribosomal subunit.

In Caldivirga maquilingensis (strain ATCC 700844 / DSM 13496 / JCM 10307 / IC-167), this protein is Large ribosomal subunit protein uL30.